Consider the following 480-residue polypeptide: UDP-N-acetylmuramoyl-L-alanyl-D-glutamate--2,6-diaminopimelate ligase (480 aa).

UDP-N-acetyl-alpha-D-muramoyl-L-alanyl-D-glutamate is bound at residue S21. 98-104 (GTNGKSS) contributes to the ATP binding site. Residues 144-145 (TT), S171, Q177, and R179 each bind UDP-N-acetyl-alpha-D-muramoyl-L-alanyl-D-glutamate. K211 is modified (N6-carboxylysine). Meso-2,6-diaminopimelate contacts are provided by residues R372, 396 to 399 (DNPR), G446, and E450. The short motif at 396–399 (DNPR) is the Meso-diaminopimelate recognition motif element.

It belongs to the MurCDEF family. MurE subfamily. Mg(2+) is required as a cofactor. Post-translationally, carboxylation is probably crucial for Mg(2+) binding and, consequently, for the gamma-phosphate positioning of ATP.

It is found in the cytoplasm. The catalysed reaction is UDP-N-acetyl-alpha-D-muramoyl-L-alanyl-D-glutamate + meso-2,6-diaminopimelate + ATP = UDP-N-acetyl-alpha-D-muramoyl-L-alanyl-gamma-D-glutamyl-meso-2,6-diaminopimelate + ADP + phosphate + H(+). It participates in cell wall biogenesis; peptidoglycan biosynthesis. In terms of biological role, catalyzes the addition of meso-diaminopimelic acid to the nucleotide precursor UDP-N-acetylmuramoyl-L-alanyl-D-glutamate (UMAG) in the biosynthesis of bacterial cell-wall peptidoglycan. The chain is UDP-N-acetylmuramoyl-L-alanyl-D-glutamate--2,6-diaminopimelate ligase from Rickettsia prowazekii (strain Madrid E).